A 258-amino-acid chain; its full sequence is Thrombin-like enzyme saxthrombin (258 aa).

A signal peptide spans 1 to 18; it reads MVLIRVLANLLILQLSYA. Positions 19 to 24 are excised as a propeptide; sequence QKSSEL. The 225-residue stretch at 25–249 folds into the Peptidase S1 domain; sequence VIGGDECNIN…YNHWIQSIIA (225 aa). Cystine bridges form between Cys31–Cys163, Cys50–Cys66, Cys98–Cys256, Cys142–Cys210, Cys174–Cys189, and Cys200–Cys225. A glycan (N-linked (GlcNAc...) asparagine) is linked at Asn44. Active-site charge relay system residues include His65 and Asp110. Catalysis depends on Ser204, which acts as the Charge relay system. The N-linked (GlcNAc...) asparagine glycan is linked to Asn251.

Belongs to the peptidase S1 family. Snake venom subfamily. In terms of assembly, monomer. As to expression, expressed by the venom gland.

Its subcellular location is the secreted. Its function is as follows. Thrombin-like snake venom serine protease that shows strong blood coagulation activity in vitro. The protein is Thrombin-like enzyme saxthrombin of Gloydius intermedius (Central Asian pit viper).